The chain runs to 143 residues: KESAAAKFRRQHMDSGSSSSGNSNYCNLMMKRRRMTHGRCKPVNTFVHESLDDVKAVCSQKNITCKNGQPNCYQSNSTMNITDCRETGGSKYPNCAYKTSQKQKYITVACEGNPYVPVHFDGAVLLPATPLPSLPPPHKRRLL.

A disordered region spans residues 1–21; that stretch reads KESAAAKFRRQHMDSGSSSSG. The substrate site is built by lysine 7 and arginine 10. Histidine 12 functions as the Proton acceptor in the catalytic mechanism. 4 disulfides stabilise this stretch: cysteine 26-cysteine 84, cysteine 40-cysteine 95, cysteine 58-cysteine 110, and cysteine 65-cysteine 72. Residue 41 to 45 participates in substrate binding; that stretch reads KPVNT. A glycan (N-linked (GlcNAc...) asparagine) is linked at asparagine 62. Substrate is bound by residues lysine 66 and arginine 85. Histidine 119 serves as the catalytic Proton donor. Threonine 129 carries an O-linked (GalNAc...) threonine glycan. O-linked (GalNAc...) serine glycosylation occurs at serine 133.

This sequence belongs to the pancreatic ribonuclease family.

Its subcellular location is the secreted. This chain is Brain ribonuclease (BRN), found in Ovis aries (Sheep).